The chain runs to 364 residues: Spermatogenesis-associated protein 22 (364 aa).

Composition is skewed to polar residues over residues Met1–Thr13, Gln30–Asp48, Lys73–Asp108, Leu137–Gln169, and Gln177–Arg189. Disordered regions lie at residues Met1–Asp51 and Pro70–Arg189.

As to quaternary structure, component of a multiprotein complex with MEIOB and RPA2. Interacts with MEIOB. Interacts with the complex BRME1:HSF2BP:BRCA2.

It is found in the chromosome. Meiosis-specific protein required for homologous recombination in meiosis I. This chain is Spermatogenesis-associated protein 22 (SPATA22), found in Bos taurus (Bovine).